The chain runs to 323 residues: Ankyrin repeat and SOCS box protein 11 (323 aa).

ANK repeat units follow at residues 64–93 (ADRS…NVNL), 97–126 (NRVS…HVNA), 130–159 (HGAT…KAQL), 162–191 (YLAS…NIEQ), 195–224 (QLGT…SVDH), 227–256 (WLDT…NLNL), and 260–289 (QGKS…ALSQ). The 51-residue stretch at 273-323 (SVRQALLLHEGPPALSQLCRLCVRKCLGRTCHHAIYALGLPESLEKFLLYQ) folds into the SOCS box domain.

This sequence belongs to the ankyrin SOCS box (ASB) family. As to quaternary structure, substrate-recognition component of the ECS(ASB11) complex, composed of ASB11, CUL5, ELOB, ELOC and RNF7/RBX2.

It is found in the endoplasmic reticulum. Its pathway is protein modification; protein ubiquitination. In terms of biological role, substrate-recognition component of a cullin-5-RING E3 ubiquitin-protein ligase complex (ECS complex, also named CRL5 complex), which mediates the ubiquitination and subsequent proteasomal degradation of target proteins, such as BIK, DIRAS2 and RPN1. The ECS(ASB11) complex acts as a regulator of the endoplasmic reticulum unfolded protein response by mediating ubiquitination and degradation of BIK. The sequence is that of Ankyrin repeat and SOCS box protein 11 (Asb11) from Mus musculus (Mouse).